The following is a 417-amino-acid chain: N-acetylmuramoyl-L-alanine amidase AmiC (417 aa).

A signal peptide (tat-type signal) is located at residues 1–31 (MSGSNTAISRRRLLQGAGAMWLLSVSQVSLA). Residues 166 to 185 (LEKQVPPAQSGPQPGKAGRD) are disordered. One can recognise a MurNAc-LAA domain in the interval 190 to 404 (IMLDPGHGGE…VAESILAGIK (215 aa)).

This sequence belongs to the N-acetylmuramoyl-L-alanine amidase 3 family. In terms of processing, predicted to be exported by the Tat system. The position of the signal peptide cleavage has not been experimentally proven.

Its subcellular location is the periplasm. It carries out the reaction Hydrolyzes the link between N-acetylmuramoyl residues and L-amino acid residues in certain cell-wall glycopeptides.. In terms of biological role, cell-wall hydrolase involved in septum cleavage during cell division. This Escherichia coli O6:H1 (strain CFT073 / ATCC 700928 / UPEC) protein is N-acetylmuramoyl-L-alanine amidase AmiC (amiC).